Reading from the N-terminus, the 435-residue chain is Trigger factor (435 aa).

The 86-residue stretch at 161–246 (GKRVSIDFVG…VNKVEARELP (86 aa)) folds into the PPIase FKBP-type domain.

The protein belongs to the FKBP-type PPIase family. Tig subfamily.

The protein resides in the cytoplasm. The catalysed reaction is [protein]-peptidylproline (omega=180) = [protein]-peptidylproline (omega=0). Its function is as follows. Involved in protein export. Acts as a chaperone by maintaining the newly synthesized protein in an open conformation. Functions as a peptidyl-prolyl cis-trans isomerase. This Vibrio campbellii (strain ATCC BAA-1116) protein is Trigger factor.